Consider the following 498-residue polypeptide: Glycerol kinase (498 aa).

ADP is bound at residue Thr11. ATP-binding residues include Thr11, Thr12, and Ser13. Residue Thr11 participates in sn-glycerol 3-phosphate binding. Position 15 (Arg15) interacts with ADP. Positions 81, 82, 133, and 242 each coordinate sn-glycerol 3-phosphate. Residues Arg81, Glu82, Tyr133, Asp242, and Gln243 each contribute to the glycerol site. ADP is bound by residues Thr264 and Gly307. The ATP site is built by Thr264, Gly307, Gln311, and Gly411. Gly411 is an ADP binding site.

This sequence belongs to the FGGY kinase family.

The enzyme catalyses glycerol + ATP = sn-glycerol 3-phosphate + ADP + H(+). The protein operates within polyol metabolism; glycerol degradation via glycerol kinase pathway; sn-glycerol 3-phosphate from glycerol: step 1/1. Its activity is regulated as follows. Inhibited by fructose 1,6-bisphosphate (FBP). Functionally, key enzyme in the regulation of glycerol uptake and metabolism. Catalyzes the phosphorylation of glycerol to yield sn-glycerol 3-phosphate. The polypeptide is Glycerol kinase (Afipia carboxidovorans (strain ATCC 49405 / DSM 1227 / KCTC 32145 / OM5) (Oligotropha carboxidovorans)).